Here is a 277-residue protein sequence, read N- to C-terminus: Protein OPG166 (277 aa).

N-linked (GlcNAc...) asparagine; by host glycans are attached at residues Asn29 and Asn58. 5 consecutive transmembrane segments (helical) span residues 124–144 (TMLMFIFTGITLFLLFLEITY), 156–176 (GILQVFGCVIAMIELCGAFLF), 186–206 (IIGLLMMTLPSIFLIITKVFS), 219–239 (LIIYYQLAGYILTVLGLGLSL), and 247–267 (LLLSGLGTIMVSEHFSLLFLV).

This sequence belongs to the orthopoxvirus OPG166 protein family.

It localises to the host membrane. Its function is as follows. Promotes, when overexpressed, the influx of extracellular Ca(2+), leading to membrane permeability and host cell necrosis. The chain is Protein OPG166 (OPG166) from Vaccinia virus (strain Copenhagen) (VACV).